Consider the following 189-residue polypeptide: 5-hmdU DNA kinase (189 aa).

Belongs to the thymidylate kinase family. 5-hmdU DNA kinase subfamily.

The catalysed reaction is 5-hydroxymethyl-dUMP in DNA + ATP = 5-phosphomethyl-dUMP in DNA + ADP + H(+). Functionally, phosphorylates 5-hydroxymethyluracil (5hmdU) into 5-phosphomethyl-2'-deoxyuridine (5- PmdU) on DNA as a step in the pathway leading to thymidine hypermodifications in the viral genome. The phosphate is added internally to the DNA polymer. As a final result of the pathway of hypermodification, 5-AcNmdU substitutes for a subset of thymidines in the viral DNA. These modifications probably prevent degradation of viral genome by the host restriction-modification antiviral defense system. The sequence is that of 5-hmdU DNA kinase from Pseudomonas phage PaMx11.